Here is a 2528-residue protein sequence, read N- to C-terminus: Reducing polyketide synthase PKS1 (2528 aa).

A Ketosynthase family 3 (KS3) domain is found at 11–436 (ITPIAVVGMS…GANVHAILES (426 aa)). Catalysis depends on for beta-ketoacyl synthase activity residues Cys-186, His-321, and His-359. A malonyl-CoA:ACP transacylase (MAT) region spans residues 573 to 868 (FVFTGQGAQW…LGGPISQVID (296 aa)). The tract at residues 954–1092 (LDLIGVFDVH…GLISVLKSSK (139 aa)) is N-terminal hotdog fold. A PKS/mFAS DH domain is found at 954–1278 (LDLIGVFDVH…LVALDRPNSS (325 aa)). A dehydratase (DH) domain region spans residues 956–1277 (LIGVFDVHSS…TLVALDRPNS (322 aa)). The active-site Proton acceptor; for dehydratase activity is the His-986. Positions 1122 to 1278 (KTEWDVKDMY…LVALDRPNSS (157 aa)) are C-terminal hotdog fold. Residue Asp-1187 is the Proton donor; for dehydratase activity of the active site. The segment at 1827 to 2139 (GLLDSLHFTV…TGRHMGKMVA (313 aa)) is enoyl reductase (ER) domain. A ketoreductase (KR) domain region spans residues 2164–2341 (ASYLLVGGVG…ATVIDIGAVH (178 aa)). The 78-residue stretch at 2442–2519 (SAVTIVLSAL…ALAVKIAARS (78 aa)) folds into the Carrier domain. Ser-2479 bears the O-(pantetheine 4'-phosphoryl)serine mark.

It functions in the pathway mycotoxin biosynthesis. Its function is as follows. Reducing polyketide synthase (PKS); part of the Tox1A locus, one of the 2 loci that mediate the biosynthesis of T-toxin, a family of linear polyketides 37 to 45 carbons in length, of which the major component is 41 carbons, and which leads to high virulence to maize. One of the PKSs (PKS1 or PKS2) could synthesize a precursor, used subsequently by the other PKS as starter unit, to add additional carbons. Variability in the length of the final carbon backbone C35-47 could be achieved by varying the number of condensation cycles, or use of different starter or extender units or might be due to decarboxylation of the penultimate product, catalyzed by DEC1. Additional proteins are required for the biosynthesis of T-toxin, including oxidoreductases RED1, RED2, RED3, LAM1 and OXI1, as well as esterase TOX9. This is Reducing polyketide synthase PKS1 from Cochliobolus heterostrophus (strain C4 / ATCC 48331 / race T) (Southern corn leaf blight fungus).